We begin with the raw amino-acid sequence, 223 residues long: Adenylate kinase (223 aa).

10 to 15 serves as a coordination point for ATP; the sequence is GSGKGT. The interval 30–59 is NMP; the sequence is ESGAIFRQHIGGGTELGKKAKEYIDRGDLV. AMP is bound by residues S31, R36, 57–59, 84–87, and Q91; these read DLV and GFPR. Positions 125-164 are LID; that stretch reads GRRLCKNDNNHPNNIFIDAIKPDGDVCRVCGGSLSARADD. R126 lines the ATP pocket. Residues R161 and R173 each contribute to the AMP site. ATP is bound at residue G209.

It belongs to the adenylate kinase family. As to quaternary structure, monomer.

The protein localises to the cytoplasm. The enzyme catalyses AMP + ATP = 2 ADP. Its pathway is purine metabolism; AMP biosynthesis via salvage pathway; AMP from ADP: step 1/1. Its function is as follows. Catalyzes the reversible transfer of the terminal phosphate group between ATP and AMP. Plays an important role in cellular energy homeostasis and in adenine nucleotide metabolism. The sequence is that of Adenylate kinase from Nitratidesulfovibrio vulgaris (strain DSM 19637 / Miyazaki F) (Desulfovibrio vulgaris).